The chain runs to 156 residues: D-aminoacyl-tRNA deacylase (156 aa).

The short motif at 142–143 (GP) is the Gly-cisPro motif, important for rejection of L-amino acids element.

This sequence belongs to the DTD family. As to quaternary structure, homodimer.

The protein resides in the cytoplasm. The catalysed reaction is glycyl-tRNA(Ala) + H2O = tRNA(Ala) + glycine + H(+). It carries out the reaction a D-aminoacyl-tRNA + H2O = a tRNA + a D-alpha-amino acid + H(+). Its function is as follows. An aminoacyl-tRNA editing enzyme that deacylates mischarged D-aminoacyl-tRNAs. Also deacylates mischarged glycyl-tRNA(Ala), protecting cells against glycine mischarging by AlaRS. Acts via tRNA-based rather than protein-based catalysis; rejects L-amino acids rather than detecting D-amino acids in the active site. By recycling D-aminoacyl-tRNA to D-amino acids and free tRNA molecules, this enzyme counteracts the toxicity associated with the formation of D-aminoacyl-tRNA entities in vivo and helps enforce protein L-homochirality. This Cupriavidus pinatubonensis (strain JMP 134 / LMG 1197) (Cupriavidus necator (strain JMP 134)) protein is D-aminoacyl-tRNA deacylase.